The chain runs to 282 residues: High mobility group nucleosome-binding domain-containing protein 5 (282 aa).

Residues 1 to 282 (MPKRKAAGQG…GKKEEPQSIV (282 aa)) are disordered. Thr-31 is modified (phosphothreonine). The segment covering 37–46 (KRTSSSRKMK) has biased composition (basic residues). Lys-67 participates in a covalent cross-link: Glycyl lysine isopeptide (Lys-Gly) (interchain with G-Cter in SUMO2). Tyr-76 carries the phosphotyrosine modification. Residues 81-119 (KNGEAKITEAPASEKEIVEVKEENIEDATEKGGEKKEAV) are compositionally biased toward basic and acidic residues. Position 93 is a phosphoserine (Ser-93). Lys-101 is covalently cross-linked (Glycyl lysine isopeptide (Lys-Gly) (interchain with G-Cter in SUMO1); alternate). Lys-101 participates in a covalent cross-link: Glycyl lysine isopeptide (Lys-Gly) (interchain with G-Cter in SUMO2); alternate. Lys-124 is covalently cross-linked (Glycyl lysine isopeptide (Lys-Gly) (interchain with G-Cter in SUMO2)). Residues 125 to 138 (NEEEDQKEDEEDQN) are compositionally biased toward acidic residues. Basic and acidic residues-rich tracts occupy residues 139-152 (EEKG…KDEK) and 158-256 (KEDK…KEDL). Residues 257 to 270 (KEEEEGKEEDEIKE) are compositionally biased toward acidic residues. Residues 271–282 (DDGKKEEPQSIV) show a composition bias toward basic and acidic residues.

It belongs to the HMGN family. Ubiquitously expressed.

It localises to the nucleus. Functionally, preferentially binds to euchromatin and modulates cellular transcription by counteracting linker histone-mediated chromatin compaction. The protein is High mobility group nucleosome-binding domain-containing protein 5 (HMGN5) of Homo sapiens (Human).